We begin with the raw amino-acid sequence, 513 residues long: Glycine/sarcosine/betaine reductase complex component C subunit beta (513 aa).

In terms of assembly, heterooctamer of four alpha and four beta subunits. Component of the glycine, sarcosine and betaine reductase complexes, together with proteins A and B.

The catalysed reaction is acetyl phosphate + [thioredoxin]-disulfide + NH4(+) + H2O = [thioredoxin]-dithiol + glycine + phosphate + H(+). It carries out the reaction acetyl phosphate + methylamine + [thioredoxin]-disulfide + H2O = sarcosine + [thioredoxin]-dithiol + phosphate + H(+). The enzyme catalyses acetyl phosphate + trimethylamine + [thioredoxin]-disulfide + H2O = glycine betaine + [thioredoxin]-dithiol + phosphate + H(+). Its function is as follows. In the first step of glycine, betaine and sarcosine reductases, the substrate is bound to component PB via a Schiff base intermediate. Then the PB-activated substrate is nucleophilically attacked by the selenol anion of component PA to transform it to a carboxymethylated selenoether and the respective amine. By action of component PC, acetyl phosphate is formed, leaving component PA in its oxidized state. Finally component PA becomes reduced by the thioredoxin system to start a new catalytic cycle of reductive deamination. The polypeptide is Glycine/sarcosine/betaine reductase complex component C subunit beta (grdC) (Peptoclostridium acidaminophilum (Eubacterium acidaminophilum)).